The primary structure comprises 345 residues: Succinylglutamate desuccinylase (345 aa).

Zn(2+) is bound by residues H64, E67, and H161. E225 is an active-site residue.

This sequence belongs to the AspA/AstE family. Succinylglutamate desuccinylase subfamily. Zn(2+) is required as a cofactor.

The catalysed reaction is N-succinyl-L-glutamate + H2O = L-glutamate + succinate. Its pathway is amino-acid degradation; L-arginine degradation via AST pathway; L-glutamate and succinate from L-arginine: step 5/5. Transforms N(2)-succinylglutamate into succinate and glutamate. In Shewanella pealeana (strain ATCC 700345 / ANG-SQ1), this protein is Succinylglutamate desuccinylase.